Consider the following 162-residue polypeptide: Phenazine biosynthesis protein PhzB 2 (162 aa).

A Phosphothreonine modification is found at Thr-91.

The protein belongs to the PhzA/PhzB family.

Its function is as follows. Involved in the biosynthesis of the antibiotic phenazine, a nitrogen-containing heterocyclic molecule having important roles in virulence, competition and biological control. The protein is Phenazine biosynthesis protein PhzB 2 (phzB2) of Pseudomonas aeruginosa (strain UCBPP-PA14).